The chain runs to 475 residues: MKMPFNIGLIHFVGVGGIGMSGIAEVFHNLGYKVQGSDHVDSANVERLRGKGINIQIGHHAENLGDAEVVVLSTAIKKTNPEYIAAKEKHLPIVRRAEMLAELMRFRRAIAVGGTHGKTTTTSMIAALLDAGRFDPMVINGGIINAYGTNARMGSGDWMVVEADESDGTFLKLPADIAVVTNIDREHLDHYGSFCAVREAFRQFVENVPFYGFAVLCLDHPEVQSLASRIDDRWVITYGTNPQADIRFLNLSMDGQKTHFDVFIRSRKTGKETELKNLVLPMSGQHNVSNATAAIAIAHELGISNESIKKGLAEFGGVKRRFTQTGSWRGIEIFDDYGHHPVEIKAVLYAARESAKGRVIAIVQPHRYSRLYHLFDDFAACFNDADTVLIAPIYGAGEAPIAGFGARELVEHIKMAGHRDVRLIHCLEDVVLIVSTFAKPGDYVVFLGAGNITQWAAALPHQLAVLDNNDEFSVD.

An ATP-binding site is contributed by 114-120 (GTHGKTT).

It belongs to the MurCDEF family.

The protein resides in the cytoplasm. It catalyses the reaction UDP-N-acetyl-alpha-D-muramate + L-alanine + ATP = UDP-N-acetyl-alpha-D-muramoyl-L-alanine + ADP + phosphate + H(+). Its pathway is cell wall biogenesis; peptidoglycan biosynthesis. Its function is as follows. Cell wall formation. The sequence is that of UDP-N-acetylmuramate--L-alanine ligase from Bartonella quintana (strain Toulouse) (Rochalimaea quintana).